The chain runs to 1004 residues: Glycine dehydrogenase (decarboxylating), mitochondrial (1004 aa).

N6-(pyridoxal phosphate)lysine is present on Lys738.

This sequence belongs to the GcvP family. Homodimer. Interacts with GCSH. The glycine cleavage system is composed of four proteins: P (GLDC), T (GCST), L (DLD) and H (GCSH). Requires pyridoxal 5'-phosphate as cofactor. As to expression, liver (at protein level).

The protein resides in the mitochondrion. The enzyme catalyses N(6)-[(R)-lipoyl]-L-lysyl-[glycine-cleavage complex H protein] + glycine + H(+) = N(6)-[(R)-S(8)-aminomethyldihydrolipoyl]-L-lysyl-[glycine-cleavage complex H protein] + CO2. Stimulated by lipoic acid. Inhibited in presence of methylamine. In terms of biological role, the glycine cleavage system catalyzes the degradation of glycine. The P protein (GLDC) binds the alpha-amino group of glycine through its pyridoxal phosphate cofactor; CO(2) is released and the remaining methylamine moiety is then transferred to the lipoamide cofactor of the H protein (GCSH). This Gallus gallus (Chicken) protein is Glycine dehydrogenase (decarboxylating), mitochondrial.